The sequence spans 288 residues: G1/S-specific cyclin-D2 (288 aa).

The 126-residue stretch at 26–151 (LQNLLTIEER…VLGKLKWNLA (126 aa)) folds into the Cyclin N-terminal domain. The tract at residues 264–288 (QHNGSKSVEDPDQATTPTDVRDVDL) is disordered. Ser-270 is modified (phosphoserine). Thr-279 is subject to Phosphothreonine.

This sequence belongs to the cyclin family. Cyclin D subfamily. Interacts with either CDK4 or CDK6 protein kinase to form a serine/threonine kinase holoenzyme complex. The cyclin subunit imparts substrate specificity to the complex. In terms of processing, phosphorylation at Thr-279 by MAP kinases is required for ubiquitination and degradation by the DCX(AMBRA1) complex. Ubiquitinated by the DCX(AMBRA1) complex during the transition from G1 to S cell phase, leading to its degradation: ubiquitination is dependent on Thr-279 phosphorylation. The DCX(AMBRA1) complex represents the major regulator of CCND2 stability during the G1/S transition. Polyubiquitinated by the SCF(FBXL2) complex, leading to proteasomal degradation.

The protein resides in the nucleus. It is found in the cytoplasm. The protein localises to the nucleus membrane. In terms of biological role, regulatory component of the cyclin D2-CDK4 (DC) complex that phosphorylates and inhibits members of the retinoblastoma (RB) protein family including RB1 and regulates the cell-cycle during G(1)/S transition. Phosphorylation of RB1 allows dissociation of the transcription factor E2F from the RB/E2F complex and the subsequent transcription of E2F target genes which are responsible for the progression through the G(1) phase. Hypophosphorylates RB1 in early G(1) phase. Cyclin D-CDK4 complexes are major integrators of various mitogenenic and antimitogenic signals. The polypeptide is G1/S-specific cyclin-D2 (Ccnd2) (Rattus norvegicus (Rat)).